An 889-amino-acid chain; its full sequence is Translation initiation factor IF-2 (889 aa).

2 disordered regions span residues 47–85 (GHLKKQHGDESEAKPNKLTLNRKTKSTLTMGHGSKAKSV) and 206–302 (AEAA…FTKP). Composition is skewed to basic and acidic residues over residues 52 to 61 (QHGDESEAKP), 214 to 241 (AAKKLAEENEGRWKEQEAERKAKEKEVV), and 252 to 263 (AEDKSDSADESG). Positions 389–558 (TRAPVVTIMG…LLQSEVLELT (170 aa)) constitute a tr-type G domain. The tract at residues 398–405 (GHVDHGKT) is G1. 398-405 (GHVDHGKT) provides a ligand contact to GTP. The G2 stretch occupies residues 423 to 427 (GITQH). The G3 stretch occupies residues 444–447 (DTPG). GTP-binding positions include 444 to 448 (DTPGH) and 498 to 501 (NKMD). The interval 498 to 501 (NKMD) is G4. A G5 region spans residues 534–536 (SAK).

Belongs to the TRAFAC class translation factor GTPase superfamily. Classic translation factor GTPase family. IF-2 subfamily.

It localises to the cytoplasm. One of the essential components for the initiation of protein synthesis. Protects formylmethionyl-tRNA from spontaneous hydrolysis and promotes its binding to the 30S ribosomal subunits. Also involved in the hydrolysis of GTP during the formation of the 70S ribosomal complex. This is Translation initiation factor IF-2 from Colwellia psychrerythraea (strain 34H / ATCC BAA-681) (Vibrio psychroerythus).